A 451-amino-acid polypeptide reads, in one-letter code: UDP-N-acetylmuramate--L-alanine ligase (451 aa).

An ATP-binding site is contributed by 110–116 (GTHGKTT).

Belongs to the MurCDEF family.

Its subcellular location is the cytoplasm. The catalysed reaction is UDP-N-acetyl-alpha-D-muramate + L-alanine + ATP = UDP-N-acetyl-alpha-D-muramoyl-L-alanine + ADP + phosphate + H(+). It functions in the pathway cell wall biogenesis; peptidoglycan biosynthesis. Cell wall formation. The polypeptide is UDP-N-acetylmuramate--L-alanine ligase (Francisella tularensis subsp. mediasiatica (strain FSC147)).